A 186-amino-acid polypeptide reads, in one-letter code: Oligoribonuclease (186 aa).

The Exonuclease domain maps to 8–171; the sequence is LIWIDLEMTG…DDIRESIAEL (164 aa). The active site involves Tyr129.

Belongs to the oligoribonuclease family.

The protein localises to the cytoplasm. Functionally, 3'-to-5' exoribonuclease specific for small oligoribonucleotides. The polypeptide is Oligoribonuclease (Mannheimia succiniciproducens (strain KCTC 0769BP / MBEL55E)).